The primary structure comprises 621 residues: 1-deoxy-D-xylulose-5-phosphate synthase (621 aa).

Thiamine diphosphate is bound by residues histidine 80 and 121 to 123 (GHS). Aspartate 152 serves as a coordination point for Mg(2+). Thiamine diphosphate-binding positions include 153–154 (GA), asparagine 181, tyrosine 288, and glutamate 370. Mg(2+) is bound at residue asparagine 181.

This sequence belongs to the transketolase family. DXPS subfamily. In terms of assembly, homodimer. Mg(2+) is required as a cofactor. The cofactor is thiamine diphosphate.

The enzyme catalyses D-glyceraldehyde 3-phosphate + pyruvate + H(+) = 1-deoxy-D-xylulose 5-phosphate + CO2. The protein operates within metabolic intermediate biosynthesis; 1-deoxy-D-xylulose 5-phosphate biosynthesis; 1-deoxy-D-xylulose 5-phosphate from D-glyceraldehyde 3-phosphate and pyruvate: step 1/1. In terms of biological role, catalyzes the acyloin condensation reaction between C atoms 2 and 3 of pyruvate and glyceraldehyde 3-phosphate to yield 1-deoxy-D-xylulose-5-phosphate (DXP). This Vibrio campbellii (strain ATCC BAA-1116) protein is 1-deoxy-D-xylulose-5-phosphate synthase.